The primary structure comprises 436 residues: Cyclic nucleotide-binding domain-containing protein 1 (436 aa).

Residues 89–105 (EQRELNEGKEESQHQQP) are compositionally biased toward basic and acidic residues. The segment at 89–108 (EQRELNEGKEESQHQQPDDS) is disordered. Position 322–436 (322–436 (YYEEWPTLSI…IIEDKDLFVA (115 aa))) interacts with a nucleoside 3',5'-cyclic phosphate.

This is Cyclic nucleotide-binding domain-containing protein 1 (CNBD1) from Homo sapiens (Human).